The chain runs to 186 residues: Interferon beta-2 (186 aa).

The signal sequence occupies residues methionine 1–serine 21. Cysteine 52 and cysteine 161 are oxidised to a cystine. Residues asparagine 131 and asparagine 173 are each glycosylated (N-linked (GlcNAc...) asparagine).

Belongs to the alpha/beta interferon family. As to quaternary structure, monomer.

It localises to the secreted. Its function is as follows. Has antiviral, antibacterial and anticancer activities. The chain is Interferon beta-2 (IFNB2) from Bos taurus (Bovine).